The chain runs to 310 residues: tRNA uridine(34) hydroxylase (310 aa).

The region spanning 124–218 is the Rhodanese domain; it reads SDPEVLLIDT…YFEEVPQEES (95 aa). Cysteine 178 (cysteine persulfide intermediate) is an active-site residue.

The protein belongs to the TrhO family.

The enzyme catalyses uridine(34) in tRNA + AH2 + O2 = 5-hydroxyuridine(34) in tRNA + A + H2O. Functionally, catalyzes oxygen-dependent 5-hydroxyuridine (ho5U) modification at position 34 in tRNAs. In Pseudomonas putida (strain ATCC 47054 / DSM 6125 / CFBP 8728 / NCIMB 11950 / KT2440), this protein is tRNA uridine(34) hydroxylase.